A 396-amino-acid chain; its full sequence is MVLEKVFLPEGVQDLLMKDCHHRRLIEGRLMEEWVKQGYMEVSSPTLEYYDLFRQGEQMLRGNKMFKLIDAKGDLLVLRPDGTLPIARMVATKMKDMVYPLKICYIQDIFRLDQEQAGKQREFRQAGVEVFGVESYEADGQVIITAIESLKALGLSDFQIEIGQTKILQSILDSMAVTTDEKDEIIMLIHNKNFSTLESLLEKLDIDPKTRLILKEIPNLFGTPQGVMESVAALPINDNIKRALEELQQICHMIQAYGFGQYISVDLGMTAPLGYYTGIIFKGFTKDLGTILCSGGRYDRLLMSFGMNCPATGFALLIDQIRKALHLGQQKKKESGPPYYLLVSHEGRHEEVAKEATRLKKTGCIVEVSLLKDPQAIDIYAKRRGVDKIIEIGEKK.

Belongs to the class-II aminoacyl-tRNA synthetase family. HisZ subfamily. In terms of assembly, heteromultimer composed of HisG and HisZ subunits.

The protein localises to the cytoplasm. It functions in the pathway amino-acid biosynthesis; L-histidine biosynthesis; L-histidine from 5-phospho-alpha-D-ribose 1-diphosphate: step 1/9. In terms of biological role, required for the first step of histidine biosynthesis. May allow the feedback regulation of ATP phosphoribosyltransferase activity by histidine. This is ATP phosphoribosyltransferase regulatory subunit from Alkaliphilus metalliredigens (strain QYMF).